The chain runs to 60 residues: Large ribosomal subunit protein bL32 (60 aa).

Over residues 1 to 16 the composition is skewed to basic residues; sequence MAVPRRKTSPSRRGMR. Residues 1–60 are disordered; it reads MAVPRRKTSPSRRGMRRSADAIKKPTYVEDKDSGELRRPHHLDLKTGMYKGRQVLKKKES. The segment covering 17-44 has biased composition (basic and acidic residues); sequence RSADAIKKPTYVEDKDSGELRRPHHLDL.

It belongs to the bacterial ribosomal protein bL32 family.

The protein is Large ribosomal subunit protein bL32 of Bradyrhizobium diazoefficiens (strain JCM 10833 / BCRC 13528 / IAM 13628 / NBRC 14792 / USDA 110).